The following is a 422-amino-acid chain: L-cysteine:1D-myo-inositol 2-amino-2-deoxy-alpha-D-glucopyranoside ligase (422 aa).

C43 serves as a coordination point for Zn(2+). Residues 43–46 (CGIT), T58, and 81–83 (NVT) each bind L-cysteinyl-5'-AMP. Positions 45-55 (ITPYDATHLGH) match the 'HIGH' region motif. Over residues 185–200 (AERGGDPDRPGKRNRL) the composition is skewed to basic and acidic residues. The tract at residues 185–221 (AERGGDPDRPGKRNRLDPMLWRGRRPGEPSWPGPRGV) is disordered. A 'ERGGDP' region motif is present at residues 186 to 191 (ERGGDP). W227 contributes to the L-cysteinyl-5'-AMP binding site. C231 contributes to the Zn(2+) binding site. An L-cysteinyl-5'-AMP-binding site is contributed by 249–251 (GSD). Residue H256 coordinates Zn(2+). An L-cysteinyl-5'-AMP-binding site is contributed by I288. Residues 294–298 (KMSKS) carry the 'KMSKS' region motif.

It belongs to the class-I aminoacyl-tRNA synthetase family. MshC subfamily. Monomer. It depends on Zn(2+) as a cofactor.

The enzyme catalyses 1D-myo-inositol 2-amino-2-deoxy-alpha-D-glucopyranoside + L-cysteine + ATP = 1D-myo-inositol 2-(L-cysteinylamino)-2-deoxy-alpha-D-glucopyranoside + AMP + diphosphate + H(+). Its function is as follows. Catalyzes the ATP-dependent condensation of GlcN-Ins and L-cysteine to form L-Cys-GlcN-Ins. This chain is L-cysteine:1D-myo-inositol 2-amino-2-deoxy-alpha-D-glucopyranoside ligase, found in Geodermatophilus obscurus (strain ATCC 25078 / DSM 43160 / JCM 3152 / CCUG 61914 / KCC A-0152 / KCTC 9177 / NBRC 13315 / NRRL B-3577 / G-20).